The chain runs to 979 residues: Pheromone-regulated membrane protein 10 (979 aa).

Disordered stretches follow at residues 1–279, 295–318, 337–411, 432–451, and 491–528; these read MGKS…FFSK, LRNV…EVDG, YSSL…PQRV, FSTA…PLLD, and ATKH…LPKF. Over residues 15-26 the composition is skewed to basic and acidic residues; the sequence is GGKDARSPETRS. Residues 29–38 are compositionally biased toward low complexity; the sequence is SRSSTDNRSS. Positions 54-68 are enriched in acidic residues; sequence LDLEEGVDDDADFDW. Polar residues predominate over residues 77–86; that stretch reads DAQSLDNPFN. Over residues 105–115 the composition is skewed to basic and acidic residues; that stretch reads AIERDAVDTIR. Residues 122–135 show a composition bias toward acidic residues; the sequence is EEPDSASDGEDVGM. Basic and acidic residues-rich tracts occupy residues 138 to 148 and 158 to 175; these read EYQRKRERLVD and SPRR…HTET. Polar residues predominate over residues 192-213; that stretch reads EAGTGTNENGEASSSGMKSSIN. The span at 253–263 shows a compositional bias: basic and acidic residues; sequence GAEKGMKSMKD. A compositionally biased stretch (low complexity) spans 360–372; sequence SPSTPSSSPGPES. Over residues 379 to 395 the composition is skewed to acidic residues; that stretch reads DDYDFDQVDSDGEDSDL. Positions 503-515 are enriched in polar residues; that stretch reads ASGSNSELPSFKN. The segment covering 516–528 has biased composition (basic residues); sequence TRPKKNKKHLPKF. 10 helical membrane-spanning segments follow: residues 658 to 678, 680 to 700, 710 to 730, 734 to 754, 773 to 793, 809 to 829, 832 to 852, 864 to 884, 886 to 906, and 946 to 966; these read WVCV…AFGG, WVNL…QFIV, VFEI…GSIG, ICFG…YIIL, FYAI…AALF, PISP…ISLI, AHWI…VVTY, FTAS…SRVW, GLAV…GVAS, and ITMI…SLIV.

It belongs to the ThrE exporter (TC 2.A.79) family.

Its subcellular location is the membrane. The chain is Pheromone-regulated membrane protein 10 from Zygosaccharomyces rouxii (strain ATCC 2623 / CBS 732 / NBRC 1130 / NCYC 568 / NRRL Y-229).